The primary structure comprises 419 residues: MDEEEHKDHQEEEDPHHFAFSDNYSEAVLGGEISATVFDVTGKVVHVAHKMTKYEFLLEHGLYPRDLRNIDPSPVSIIPSILARGRKGAGRCILVNLLHIKALILHDKVLIFDTHSKNKSDTHRLGMFLYELENKLKPTINPEKMHTDMTVLPFELRVLEAILVNVMTTLDGELQVHLKTLNEILVGLEDHVDREQLKELLIGNKNVSRFYQKAVLIRDVLEELLESDDDLQQLYLGTHPKEGLAEVELLIESYCKQADEIVQQASNVRSHIRSTEEIVNIIVDANRNALMLLELKVTIVTVGFAVGAFVAALYGMNLENFIEETNEGMVLVVGVACLGGLLVTWFNLTKLHKTQKIAMFSNAATHTASKPYMLQWIIGLLRRKRTKSRFDNIDMSRPKMKGKKSNILHQLTKMTGKRR.

The next 2 helical transmembrane spans lie at 297 to 317 (VTIV…YGMN) and 328 to 348 (GMVL…WFNL). A YGMN motif is present at residues 314-317 (YGMN).

The protein belongs to the CorA metal ion transporter (MIT) (TC 1.A.35) family. Homopentamer. Forms homooligomers. Interacts with MFM1.

The protein localises to the mitochondrion inner membrane. Its function is as follows. High-conductance magnesium-selective channel that mediates the influx of magnesium into the mitochondrial matrix. Essential for the splicing of mRNA group II introns in mitochondria by affecting mitochondrial magnesium concentrations, which are critical for group II intron splicing. It also suppresses a variety of mitochondrial intron mutations and its absence may disturb the assembly of mitochondrial membrane complexes. The protein is Mitochondrial inner membrane magnesium transporter MRS2 (MRS2) of Yarrowia lipolytica (strain CLIB 122 / E 150) (Yeast).